A 209-amino-acid chain; its full sequence is Imidazole glycerol phosphate synthase subunit HisH (209 aa).

Positions 1–205 (MIAIIDYGMG…KGVVETWKSS (205 aa)) constitute a Glutamine amidotransferase type-1 domain. Catalysis depends on Cys79, which acts as the Nucleophile. Residues His180 and Glu182 contribute to the active site.

In terms of assembly, heterodimer of HisH and HisF.

It localises to the cytoplasm. The catalysed reaction is 5-[(5-phospho-1-deoxy-D-ribulos-1-ylimino)methylamino]-1-(5-phospho-beta-D-ribosyl)imidazole-4-carboxamide + L-glutamine = D-erythro-1-(imidazol-4-yl)glycerol 3-phosphate + 5-amino-1-(5-phospho-beta-D-ribosyl)imidazole-4-carboxamide + L-glutamate + H(+). It carries out the reaction L-glutamine + H2O = L-glutamate + NH4(+). Its pathway is amino-acid biosynthesis; L-histidine biosynthesis; L-histidine from 5-phospho-alpha-D-ribose 1-diphosphate: step 5/9. Functionally, IGPS catalyzes the conversion of PRFAR and glutamine to IGP, AICAR and glutamate. The HisH subunit catalyzes the hydrolysis of glutamine to glutamate and ammonia as part of the synthesis of IGP and AICAR. The resulting ammonia molecule is channeled to the active site of HisF. This Bacillus anthracis (strain A0248) protein is Imidazole glycerol phosphate synthase subunit HisH.